The following is a 291-amino-acid chain: Diaminopimelate epimerase (291 aa).

The substrate site is built by asparagine 11 and asparagine 78. Cysteine 87 serves as the catalytic Proton donor. Substrate contacts are provided by residues glycine 88 to asparagine 89, asparagine 166, asparagine 200, and glutamate 218 to arginine 219. Cysteine 227 acts as the Proton acceptor in catalysis. Position 228–229 (glycine 228–threonine 229) interacts with substrate.

It belongs to the diaminopimelate epimerase family. As to quaternary structure, homodimer.

It localises to the cytoplasm. It carries out the reaction (2S,6S)-2,6-diaminopimelate = meso-2,6-diaminopimelate. It functions in the pathway amino-acid biosynthesis; L-lysine biosynthesis via DAP pathway; DL-2,6-diaminopimelate from LL-2,6-diaminopimelate: step 1/1. Its function is as follows. Catalyzes the stereoinversion of LL-2,6-diaminopimelate (L,L-DAP) to meso-diaminopimelate (meso-DAP), a precursor of L-lysine and an essential component of the bacterial peptidoglycan. In Mycolicibacterium smegmatis (strain ATCC 700084 / mc(2)155) (Mycobacterium smegmatis), this protein is Diaminopimelate epimerase.